Reading from the N-terminus, the 449-residue chain is Endoglucanase A (449 aa).

The tat-type signal signal peptide spans 1–31; the sequence is MSTRRTAAALLAAAAVAVGGLTALTTTAAQA. Residues 32-137 form the CBM2 domain; it reads APGCRVDYAV…SLNGTTCTGT (106 aa). A disulfide bond links cysteine 35 and cysteine 134. Positions 127–170 are disordered; the sequence is FSLNGTTCTGTVPTTSPTPTPTPTTPTPTPTPTPTPTPTVTPQP. The segment covering 132–141 has biased composition (low complexity); sequence TTCTGTVPTT. Residues 139–168 form a linker ('hinge') (Pro-Thr box) region; the sequence is PTTSPTPTPTPTTPTPTPTPTPTPTPTVTP. The span at 142–167 shows a compositional bias: pro residues; that stretch reads SPTPTPTPTTPTPTPTPTPTPTPTVT. Aspartate 247 is a catalytic residue. Intrachain disulfides connect cysteine 248/cysteine 291 and cysteine 390/cysteine 426. Aspartate 283 acts as the Proton donor in catalysis. Aspartate 423 serves as the catalytic Nucleophile. Positions 438–449 are catalytic; the sequence is EIALEMARNARW.

The protein belongs to the glycosyl hydrolase 6 (cellulase B) family. In terms of processing, the linker region (also termed 'hinge') may be a potential site for proteolysis. Predicted to be exported by the Tat system. The position of the signal peptide cleavage has not been experimentally proven.

It catalyses the reaction Endohydrolysis of (1-&gt;4)-beta-D-glucosidic linkages in cellulose, lichenin and cereal beta-D-glucans.. The biological conversion of cellulose to glucose generally requires three types of hydrolytic enzymes: (1) Endoglucanases which cut internal beta-1,4-glucosidic bonds; (2) Exocellobiohydrolases that cut the disaccharide cellobiose from the non-reducing end of the cellulose polymer chain; (3) Beta-1,4-glucosidases which hydrolyze the cellobiose and other short cello-oligosaccharides to glucose. This Cellulomonas fimi protein is Endoglucanase A (cenA).